Consider the following 158-residue polypeptide: Transcription elongation factor GreA (158 aa).

A coiled-coil region spans residues 1-26 (MNKVPLTEKGAQQLREELQELKTVVR).

Belongs to the GreA/GreB family.

Its function is as follows. Necessary for efficient RNA polymerase transcription elongation past template-encoded arresting sites. The arresting sites in DNA have the property of trapping a certain fraction of elongating RNA polymerases that pass through, resulting in locked ternary complexes. Cleavage of the nascent transcript by cleavage factors such as GreA or GreB allows the resumption of elongation from the new 3'terminus. GreA releases sequences of 2 to 3 nucleotides. The sequence is that of Transcription elongation factor GreA from Nitrosococcus oceani (strain ATCC 19707 / BCRC 17464 / JCM 30415 / NCIMB 11848 / C-107).